Here is a 295-residue protein sequence, read N- to C-terminus: Acetylglutamate kinase (295 aa).

Substrate contacts are provided by residues 64–65, Arg86, and Asn179; that span reads GG.

The protein belongs to the acetylglutamate kinase family. ArgB subfamily.

The protein resides in the cytoplasm. The catalysed reaction is N-acetyl-L-glutamate + ATP = N-acetyl-L-glutamyl 5-phosphate + ADP. It participates in amino-acid biosynthesis; L-arginine biosynthesis; N(2)-acetyl-L-ornithine from L-glutamate: step 2/4. In terms of biological role, catalyzes the ATP-dependent phosphorylation of N-acetyl-L-glutamate. This chain is Acetylglutamate kinase, found in Thermosynechococcus vestitus (strain NIES-2133 / IAM M-273 / BP-1).